The primary structure comprises 434 residues: Alpha-enolase (434 aa).

Serine 40 serves as a coordination point for Mg(2+). The substrate site is built by histidine 158 and glutamate 167. Glutamate 210 (proton donor) is an active-site residue. Mg(2+) is bound by residues aspartate 245, glutamate 293, and aspartate 318. Positions 293 and 318 each coordinate substrate. The active-site Proton acceptor is lysine 343. Substrate contacts are provided by residues 370 to 373 (SHRS) and lysine 394.

The protein belongs to the enolase family. As to quaternary structure, homodimer. Requires Mg(2+) as cofactor.

It localises to the cytoplasm. It catalyses the reaction (2R)-2-phosphoglycerate = phosphoenolpyruvate + H2O. Its pathway is carbohydrate degradation; glycolysis; pyruvate from D-glyceraldehyde 3-phosphate: step 4/5. The chain is Alpha-enolase (eno1) from Xenopus laevis (African clawed frog).